The following is a 141-amino-acid chain: Hemoglobin subunit alpha-D (141 aa).

The Globin domain maps to 1–141 (MLTAEDKKLI…VAAVLAGKYR (141 aa)). H58 and H87 together coordinate heme b.

Belongs to the globin family. Heterotetramer of two alpha-D chains and two beta chains. Red blood cells.

Involved in oxygen transport from the lung to the various peripheral tissues. This chain is Hemoglobin subunit alpha-D (HBAD), found in Coturnix japonica (Japanese quail).